The following is a 124-amino-acid chain: ATP synthase epsilon chain (124 aa).

This sequence belongs to the ATPase epsilon chain family. F-type ATPases have 2 components, CF(1) - the catalytic core - and CF(0) - the membrane proton channel. CF(1) has five subunits: alpha(3), beta(3), gamma(1), delta(1), epsilon(1). CF(0) has three main subunits: a, b and c.

It is found in the cell membrane. In terms of biological role, produces ATP from ADP in the presence of a proton gradient across the membrane. The protein is ATP synthase epsilon chain of Corynebacterium glutamicum (strain ATCC 13032 / DSM 20300 / JCM 1318 / BCRC 11384 / CCUG 27702 / LMG 3730 / NBRC 12168 / NCIMB 10025 / NRRL B-2784 / 534).